A 145-amino-acid chain; its full sequence is MGFSETQEELVLRSWQSMKKDSESIALKFFLRIFEIAPAAKQMFSFLRDSGDDVPLENHPKACESATQLRKTGDVKVREATLRRLGATHVKAGVADAYFEVVKTALLDTIKDAVPEMWSPEMKGAWEEAYDQLAAAIKEEMKKAA.

Positions 2 to 142 constitute a Globin domain; sequence GFSETQEELV…LAAAIKEEMK (141 aa). Positions 35 to 39 match the Homodimerization motif; that stretch reads EIAPA. 6 residues coordinate heme b: serine 45, histidine 59, lysine 61, arginine 84, threonine 88, and histidine 89. The Homodimerization signature appears at 96–108; it reads DAYFEVVKTALLD.

It belongs to the plant globin family. As to quaternary structure, homodimer. Requires heme b as cofactor. In terms of tissue distribution, expressed in embryonic (embryos, coleoptiles and seminal roots) and vegetative (leaves and roots) organs.

The protein localises to the cytoplasm. Its subcellular location is the nucleus. The catalysed reaction is Fe(III)-heme b-[protein] + nitric oxide + H2O = Fe(II)-heme b-[protein] + nitrite + 2 H(+). Phytoglobin that reduces nitrite to nitric oxide under anoxic conditions (e.g. during flooding or in waterlogged soil). May not function as an oxygen storage or transport protein. Has an unusually high affinity for O(2) through an hexacoordinate heme iron because of a very low dissociation constant. The chain is Anaerobic nitrite reductase NSHB5 from Oryza sativa subsp. japonica (Rice).